A 170-amino-acid chain; its full sequence is Co-chaperone protein HscB homolog (170 aa).

The region spanning 5-79 (DHFSLFGLPA…RARYLCEQAG (75 aa)) is the J domain.

Belongs to the HscB family. Interacts with HscA and stimulates its ATPase activity.

Its function is as follows. Co-chaperone involved in the maturation of iron-sulfur cluster-containing proteins. Seems to help targeting proteins to be folded toward HscA. This Bordetella parapertussis (strain 12822 / ATCC BAA-587 / NCTC 13253) protein is Co-chaperone protein HscB homolog.